Here is a 179-residue protein sequence, read N- to C-terminus: NADH dehydrogenase [ubiquinone] 1 beta subcomplex subunit 9 (179 aa).

The residue at position 2 (Ala-2) is an N-acetylalanine. Phosphoserine is present on Ser-85. The segment at Glu-136–Asp-162 is disordered.

This sequence belongs to the complex I LYR family. Mammalian complex I is composed of 45 different subunits.

Its subcellular location is the mitochondrion inner membrane. Its function is as follows. Accessory subunit of the mitochondrial membrane respiratory chain NADH dehydrogenase (Complex I), that is believed to be not involved in catalysis. Complex I functions in the transfer of electrons from NADH to the respiratory chain. The immediate electron acceptor for the enzyme is believed to be ubiquinone. This Pongo abelii (Sumatran orangutan) protein is NADH dehydrogenase [ubiquinone] 1 beta subcomplex subunit 9 (NDUFB9).